The sequence spans 370 residues: S-adenosylmethionine decarboxylase proenzyme (370 aa).

A substrate-binding site is contributed by F28. Active-site residues include E29 and E32. Substrate is bound at residue E85. S86 serves as the catalytic Schiff-base intermediate with substrate; via pyruvic acid. S86 is modified (pyruvic acid (Ser); by autocatalysis). C100 (proton donor; for catalytic activity) is an active-site residue. Catalysis depends on proton acceptor; for processing activity residues S250 and H263. E267 lines the substrate pocket.

This sequence belongs to the eukaryotic AdoMetDC family. As to quaternary structure, forms a heterodimer with catalytically inactive AdoMetDC prozyme; heterodimerization is required to activate AdoMetDC. Pyruvate serves as cofactor. Post-translationally, is synthesized initially as an inactive proenzyme. Formation of the active enzyme involves a self-maturation process in which the active site pyruvoyl group is generated from an internal serine residue via an autocatalytic post-translational modification. Two non-identical subunits are generated from the proenzyme in this reaction, and the pyruvate is formed at the N-terminus of the alpha chain, which is derived from the carboxyl end of the proenzyme. The post-translation cleavage follows an unusual pathway, termed non-hydrolytic serinolysis, in which the side chain hydroxyl group of the serine supplies its oxygen atom to form the C-terminus of the beta chain, while the remainder of the serine residue undergoes an oxidative deamination to the alpha chain.

The enzyme catalyses S-adenosyl-L-methionine + H(+) = S-adenosyl 3-(methylsulfanyl)propylamine + CO2. The protein operates within amine and polyamine biosynthesis; S-adenosylmethioninamine biosynthesis; S-adenosylmethioninamine from S-adenosyl-L-methionine: step 1/1. Its activity is regulated as follows. Allosterically activated by AdoMetDC prozyme. Activated by putrescine. Inhibited by spermine and methylglyoxal-bis(guanylhydrazone) (MGBG) and slightly by spermidine. Inhibited by 5'-([(Z)-4-amino-2-butenyl]methylamino)-5'-deoxyadenosine (MDL 73811). Functionally, probably in association with catalytically inactive AdoMetDC prozyme, catalyzes the decarboxylation of S-adenosyl-L-methionine which is essential for the biosynthesis of the polyamine spermidine. Required for growth and survival during the bloodstream life cycle stage. The polypeptide is S-adenosylmethionine decarboxylase proenzyme (Trypanosoma cruzi).